We begin with the raw amino-acid sequence, 509 residues long: ATP synthase subunit alpha, mitochondrial (509 aa).

Residue 171–178 participates in ATP binding; it reads GDRQTGKT.

The protein belongs to the ATPase alpha/beta chains family. F-type ATPases have 2 components, CF(1) - the catalytic core - and CF(0) - the membrane proton channel. CF(1) has five subunits: alpha(3), beta(3), gamma(1), delta(1), epsilon(1). CF(0) has three main subunits: a, b and c.

The protein resides in the mitochondrion. It localises to the mitochondrion inner membrane. Functionally, mitochondrial membrane ATP synthase (F(1)F(0) ATP synthase or Complex V) produces ATP from ADP in the presence of a proton gradient across the membrane which is generated by electron transport complexes of the respiratory chain. F-type ATPases consist of two structural domains, F(1) - containing the extramembraneous catalytic core, and F(0) - containing the membrane proton channel, linked together by a central stalk and a peripheral stalk. During catalysis, ATP synthesis in the catalytic domain of F(1) is coupled via a rotary mechanism of the central stalk subunits to proton translocation. Subunits alpha and beta form the catalytic core in F(1). Rotation of the central stalk against the surrounding alpha(3)beta(3) subunits leads to hydrolysis of ATP in three separate catalytic sites on the beta subunits. Subunit alpha does not bear the catalytic high-affinity ATP-binding sites. This is ATP synthase subunit alpha, mitochondrial (ATPA) from Triticum aestivum (Wheat).